The primary structure comprises 201 residues: Probable GTP-binding protein EngB (201 aa).

In terms of domain architecture, EngB-type G spans 22–195 (TQPEFAFAGK…WRCIEQFLEV (174 aa)). GTP is bound by residues 30–37 (GKSNVGKS), 57–61 (GKTQT), 75–78 (DLPG), 142–145 (TKLD), and 174–176 (FSS). Positions 37 and 59 each coordinate Mg(2+).

Belongs to the TRAFAC class TrmE-Era-EngA-EngB-Septin-like GTPase superfamily. EngB GTPase family. The cofactor is Mg(2+).

In terms of biological role, necessary for normal cell division and for the maintenance of normal septation. The polypeptide is Probable GTP-binding protein EngB (Lachnoclostridium phytofermentans (strain ATCC 700394 / DSM 18823 / ISDg) (Clostridium phytofermentans)).